A 313-amino-acid polypeptide reads, in one-letter code: D-alanine--D-alanine ligase (313 aa).

The ATP-grasp domain occupies 108–308 (KLVWQQLGIP…YQELVVKVLA (201 aa)). 138–193 (VAKLGLPLFVKPASEGSSVAVIKVKTADALVPALEEAVKFDKIVVVEKSIEGGGEY) is a binding site for ATP. The Mg(2+) site is built by D262, E275, and N277.

The protein belongs to the D-alanine--D-alanine ligase family. Mg(2+) serves as cofactor. Requires Mn(2+) as cofactor.

Its subcellular location is the cytoplasm. It carries out the reaction 2 D-alanine + ATP = D-alanyl-D-alanine + ADP + phosphate + H(+). Its pathway is cell wall biogenesis; peptidoglycan biosynthesis. In terms of biological role, cell wall formation. The protein is D-alanine--D-alanine ligase of Paraburkholderia phymatum (strain DSM 17167 / CIP 108236 / LMG 21445 / STM815) (Burkholderia phymatum).